We begin with the raw amino-acid sequence, 546 residues long: Coatomer subunit delta (546 aa).

The interaction with DSL1 stretch occupies residues 190–440 (NRFMGSKDPN…VIFTIPVFPQ (251 aa)). The segment at 236–287 (PMATSQRAGHSATGGMKLGGGAGRRAGAAPRPSAISSASSGTPPPPEEDVPE) is disordered. Low complexity predominate over residues 260-276 (RAGAAPRPSAISSASSG). Position 277 is a phosphothreonine (T277). The 259-residue stretch at 288-546 (NNGILISIKE…SLKSDEYLVQ (259 aa)) folds into the MHD domain.

Belongs to the adaptor complexes medium subunit family. Delta-COP subfamily. Oligomeric complex that consists of at least the alpha, beta, beta', gamma, delta, epsilon and zeta subunits. Interacts with DSL1.

It is found in the cytoplasm. Its subcellular location is the golgi apparatus membrane. The protein resides in the cytoplasmic vesicle. The protein localises to the COPI-coated vesicle membrane. Its function is as follows. The coatomer is a cytosolic protein complex that binds to dilysine motifs and reversibly associates with Golgi non-clathrin-coated vesicles, which further mediate biosynthetic protein transport from the ER, via the Golgi up to the trans Golgi network. Coatomer complex is required for budding from Golgi membranes, and is essential for the retrograde Golgi-to-ER transport of dilysine-tagged proteins. This Saccharomyces cerevisiae (strain ATCC 204508 / S288c) (Baker's yeast) protein is Coatomer subunit delta (RET2).